Consider the following 379-residue polypeptide: Transcription factor bHLH122 (379 aa).

Over residues 1 to 17 (MESEFQQHHFLLHDHQH) the composition is skewed to basic and acidic residues. The interval 1–21 (MESEFQQHHFLLHDHQHQRPR) is disordered. Serine 74 carries the post-translational modification Phosphoserine. Disordered stretches follow at residues 79–98 (TFNS…EDED), 133–156 (SVSR…ARHN), and 190–286 (TSNT…MSLP). Residues 84–93 (GTEKKPPEVK) are compositionally biased toward basic and acidic residues. Residues 190-200 (TSNTEASSLTP) are compositionally biased toward polar residues. 2 positions are modified to phosphoserine: serine 213 and serine 234. The segment covering 235 to 261 (GGFNRSFGNEGSASSKLTALARTQSGG) has biased composition (polar residues). Residues 265 to 274 (YKTKDEDSAS) are compositionally biased toward basic and acidic residues. A bHLH domain is found at 310–360 (CATHPRSIAERVRRTKISERMRKLQDLVPNMDTQTNTADMLDLAVQYIKDL).

As to quaternary structure, homodimer.

Its subcellular location is the nucleus. This chain is Transcription factor bHLH122 (BHLH122), found in Arabidopsis thaliana (Mouse-ear cress).